A 600-amino-acid polypeptide reads, in one-letter code: Proline--tRNA ligase (600 aa).

It belongs to the class-II aminoacyl-tRNA synthetase family. ProS type 1 subfamily. Homodimer.

The protein resides in the cytoplasm. The catalysed reaction is tRNA(Pro) + L-proline + ATP = L-prolyl-tRNA(Pro) + AMP + diphosphate. Functionally, catalyzes the attachment of proline to tRNA(Pro) in a two-step reaction: proline is first activated by ATP to form Pro-AMP and then transferred to the acceptor end of tRNA(Pro). As ProRS can inadvertently accommodate and process non-cognate amino acids such as alanine and cysteine, to avoid such errors it has two additional distinct editing activities against alanine. One activity is designated as 'pretransfer' editing and involves the tRNA(Pro)-independent hydrolysis of activated Ala-AMP. The other activity is designated 'posttransfer' editing and involves deacylation of mischarged Ala-tRNA(Pro). The misacylated Cys-tRNA(Pro) is not edited by ProRS. This Prochlorococcus marinus (strain AS9601) protein is Proline--tRNA ligase.